A 322-amino-acid polypeptide reads, in one-letter code: 5'-AMP-activated protein kinase subunit gamma (322 aa).

CBS domains follow at residues 37-97 (VSYR…NPDK), 118-181 (VDQL…CRET), 194-253 (ITQD…YNDL), and 262-322 (MRRS…LGSN). ADP-binding positions include Ile42, Arg146, 166–169 (TQYR), and Thr195. AMP is bound by residues Thr195, Lys200, and 221 to 222 (SS). Residues Thr195, Lys200, and 221–222 (SS) contribute to the ATP site. ADP-binding positions include 221-222 (SS), 291-293 (RVH), and 309-312 (TLSD). Residue 309 to 312 (TLSD) coordinates AMP. Position 309–312 (309–312 (TLSD)) interacts with ATP.

It belongs to the 5'-AMP-activated protein kinase gamma subunit family. AMPK is a heterotrimer of an alpha catalytic subunit (SNF1), a beta (SIP1, SIP2 or GAL83) and a gamma non-catalytic subunits (SNF4). Note=Interaction between SNF1 and SNF4 is inhibited by high levels of glucose.

The protein resides in the nucleus. Its subcellular location is the cytoplasm. Adenine nucleotides-binding subunit gamma of AMP-activated protein kinase (AMPK), an energy sensor protein kinase that plays a key role in regulating cellular energy metabolism. In response to reduction of intracellular ATP levels, AMPK activates energy-producing pathways and inhibits energy-consuming processes: inhibits protein, carbohydrate and lipid biosynthesis, as well as cell growth and proliferation. AMPK acts via direct phosphorylation of metabolic enzymes, and by longer-term effects via phosphorylation of transcription regulators. Gamma non-catalytic subunit mediates binding to AMP, ADP and ATP, leading to activate or inhibit AMPK: AMP-binding results in allosteric activation of alpha catalytic subunit (SNF1) both by inducing phosphorylation and preventing dephosphorylation of catalytic subunits. This Saccharomyces cerevisiae (strain ATCC 204508 / S288c) (Baker's yeast) protein is 5'-AMP-activated protein kinase subunit gamma (SNF4).